The sequence spans 391 residues: Multidrug resistance protein MdtL (391 aa).

The Cytoplasmic segment spans residues 1–3 (MSR). Residues 4–24 (FLICSFALVLLYPAGIDMYLV) traverse the membrane as a helical segment. At 25-41 (GLPRIAADLNASEAQLH) the chain is on the periplasmic side. The chain crosses the membrane as a helical span at residues 42 to 62 (IAFSVYLAGMAAAMLFAGKVA). The Cytoplasmic portion of the chain corresponds to 63–68 (DRSGRK). Residues 69–89 (PVAIPGAALFIIASVFCSLAE) form a helical membrane-spanning segment. Residues 90–92 (TSA) are Periplasmic-facing. A helical transmembrane segment spans residues 93–113 (LFLAGRFLQGLGAGCCYVVAF). The Cytoplasmic portion of the chain corresponds to 114–130 (AILRDTLDDRRRAKVLS). A helical membrane pass occupies residues 131–151 (LLNGITCIIPVLAPVLGHLIM). Topologically, residues 152–157 (LKFPWQ) are periplasmic. A helical transmembrane segment spans residues 158–178 (SLFWTMATMGIAVLMLSLFIL). The Cytoplasmic segment spans residues 179–202 (KETRPAAPAASDKPRENSESLLNR). A helical membrane pass occupies residues 203-222 (FFLSRVVITTLSVSVILTFV). The Periplasmic segment spans residues 223–244 (NTSPVLLMEIMGFERGEYATIM). Residues 245–265 (ALTAGVSMTVSFSTPFALGIF) traverse the membrane as a helical segment. Residues 266–268 (KPR) lie on the Cytoplasmic side of the membrane. The chain crosses the membrane as a helical span at residues 269 to 289 (TLMITSQVLFLAAGITLAVSP). Residues 290 to 292 (SHA) are Periplasmic-facing. Residues 293-313 (VSLFGITLICAGFSVGFGVAM) form a helical membrane-spanning segment. Topologically, residues 314–330 (SQALGPFSLRAGVASST) are cytoplasmic. The chain crosses the membrane as a helical span at residues 331–351 (LGIAQVCGSSLWIWLAAVVGI). Over 352–355 (GAWN) the chain is Periplasmic. The chain crosses the membrane as a helical span at residues 356 to 376 (MLIGILIACSIVSLLLIMFVA). Topologically, residues 377-391 (PGRPVAAHEEIHHHA) are cytoplasmic.

It belongs to the major facilitator superfamily. DHA1 family. MdtL (TC 2.A.1.2.22) subfamily.

It is found in the cell inner membrane. Functionally, confers resistance to chloramphenicol. The chain is Multidrug resistance protein MdtL from Escherichia coli O6:K15:H31 (strain 536 / UPEC).